We begin with the raw amino-acid sequence, 189 residues long: dCTP deaminase (189 aa).

DCTP contacts are provided by residues 112–117, 136–138, glutamine 157, tyrosine 171, and glutamine 181; these read KSTYAR and TLE. Glutamate 138 serves as the catalytic Proton donor/acceptor.

It belongs to the dCTP deaminase family. In terms of assembly, homotrimer.

It carries out the reaction dCTP + H2O + H(+) = dUTP + NH4(+). It participates in pyrimidine metabolism; dUMP biosynthesis; dUMP from dCTP (dUTP route): step 1/2. Functionally, catalyzes the deamination of dCTP to dUTP. The sequence is that of dCTP deaminase from Burkholderia thailandensis (strain ATCC 700388 / DSM 13276 / CCUG 48851 / CIP 106301 / E264).